The following is a 475-amino-acid chain: MPGVSARRLSHEERRQLAVNLTRVVTLYRSILDAYIIEFFTDNLWGTLPCSWQEALDGLNPPQLATLLLGMPREGEVARYRSVWPLTLLALKSTAYALAFTRTPGFQTPSEFLENPSQSSRLTAPFRKHVRPKKQHEIRRLGELVKKLSDLTGCTQVVDVGSGQGHLSRFMSLGLGLMVKSIEGDQRLVERAQRLDQELLQTLEKEEKRNPKVVQTGPRHPPHHVVRWVDPTTLCEELLLPLETSPQSRARLLLTGLHACGDLSVALLKHFCCCPEVVALASVGCCYMKLSDPGGYPLSQWVAGLPGYELPYRLREGACHALEEYAERLQKAGPSLRTHCYRAALETVIRCAQPELRRPGVQGIPRVHELKIEEYVQRGLQRVGLDPHLPLNVAALRAHQAQENRVVAFFSLALLLAPLVETLILLDRLLYLQEQGFHAELLPIFSPELSPRNLVLVATKGPLGEAFSLLETEDN.

A coiled-coil region spans residues 186–210; that stretch reads QRLVERAQRLDQELLQTLEKEEKRN. A helical transmembrane segment spans residues 406–426; sequence VVAFFSLALLLAPLVETLILL.

It belongs to the METTL25 family.

The protein localises to the membrane. This is Methyltransferase-like protein 25B from Bos taurus (Bovine).